The primary structure comprises 416 residues: Pentraxin fusion protein (416 aa).

The signal sequence occupies residues 1-14 (MKSLLLFLKSQVFG). N-linked (GlcNAc...) asparagine glycosylation is present at Asn-129. Positions 184 to 206 (GTEASDSSESVDGTEAPASPESD) are disordered. The Pentraxin (PTX) domain occupies 220 to 416 (TNKSFMFPKE…YSMIGNVAEV (197 aa)). A glycan (N-linked (GlcNAc...) asparagine) is linked at Asn-221. An intrachain disulfide couples Cys-251 to Cys-311. 4 residues coordinate Ca(2+): Asp-275, Gln-353, Asp-354, and Gln-364.

Ca(2+) serves as cofactor.

This Xenopus laevis (African clawed frog) protein is Pentraxin fusion protein (pxn1).